We begin with the raw amino-acid sequence, 97 residues long: Co-chaperonin GroES (97 aa).

It belongs to the GroES chaperonin family. Heptamer of 7 subunits arranged in a ring. Interacts with the chaperonin GroEL.

The protein resides in the cytoplasm. Together with the chaperonin GroEL, plays an essential role in assisting protein folding. The GroEL-GroES system forms a nano-cage that allows encapsulation of the non-native substrate proteins and provides a physical environment optimized to promote and accelerate protein folding. GroES binds to the apical surface of the GroEL ring, thereby capping the opening of the GroEL channel. The protein is Co-chaperonin GroES of Buchnera aphidicola subsp. Pemphigus spyrothecae.